Consider the following 156-residue polypeptide: Small ribosomal subunit protein uS7 (156 aa).

Belongs to the universal ribosomal protein uS7 family. In terms of assembly, part of the 30S ribosomal subunit. Contacts proteins S9 and S11.

Its function is as follows. One of the primary rRNA binding proteins, it binds directly to 16S rRNA where it nucleates assembly of the head domain of the 30S subunit. Is located at the subunit interface close to the decoding center, probably blocks exit of the E-site tRNA. The chain is Small ribosomal subunit protein uS7 from Anaeromyxobacter dehalogenans (strain 2CP-1 / ATCC BAA-258).